A 288-amino-acid chain; its full sequence is 4-hydroxybenzoate octaprenyltransferase (288 aa).

8 helical membrane passes run 23–43 (IGSLLLLWPTLWALWLAGRGI), 46–66 (AKILVVFVLGVFFMRAAGCVV), 98–118 (ILFVVLILLSFGLVLTLNSMT), 141–161 (LPQVVLGAAFGWSIPMGFAAV), 163–183 (ESLPLVCWLLLLANICWTVAY), 213–233 (LIIGLLQLATLLLMVAIGWLM), 234–254 (NLGGAFYWSILLAGALFTHQQ), and 268–288 (AFLNNNYVGLVLFLGILISYW).

This sequence belongs to the UbiA prenyltransferase family. It depends on Mg(2+) as a cofactor.

The protein localises to the cell inner membrane. The catalysed reaction is all-trans-octaprenyl diphosphate + 4-hydroxybenzoate = 4-hydroxy-3-(all-trans-octaprenyl)benzoate + diphosphate. Its pathway is cofactor biosynthesis; ubiquinone biosynthesis. In terms of biological role, catalyzes the prenylation of para-hydroxybenzoate (PHB) with an all-trans polyprenyl group. Mediates the second step in the final reaction sequence of ubiquinone-8 (UQ-8) biosynthesis, which is the condensation of the polyisoprenoid side chain with PHB, generating the first membrane-bound Q intermediate 3-octaprenyl-4-hydroxybenzoate. The polypeptide is 4-hydroxybenzoate octaprenyltransferase (Yersinia pestis bv. Antiqua (strain Antiqua)).